Consider the following 296-residue polypeptide: MGFVKVVKNKAYFKRYQVKFRRRREGKTDYYARKRLVIQDKNKYNTPKYRMIVRVTNRDIICQIAYARIEGDMIVCAAYAHELPKYGVKVGLTNYAAAYCTGLLLARRLLNKFGLDKVYEGQVEVTGDEYNVESVDGEPGAFTCYLDAGLTRTTTGNKVFGALKGAVDGGLSIPHSTKRFPGYDSESKEFNPEVHRKHIFAQNIAEYMRLLMEEDEDAYKKQFSQYIKNGVAADQLEDIYKKAHAGIRENPVHEKKPKKEVKKKRWNRAKLSLEQKKDRVAQKKASFLRAQEKADS.

A disordered region spans residues 251 to 296 (PVHEKKPKKEVKKKRWNRAKLSLEQKKDRVAQKKASFLRAQEKADS). Over residues 255-268 (KKPKKEVKKKRWNR) the composition is skewed to basic residues. The segment covering 271-281 (LSLEQKKDRVA) has biased composition (basic and acidic residues).

Belongs to the universal ribosomal protein uL18 family. As to quaternary structure, component of the large ribosomal subunit (LSU). Part of a LSU subcomplex, the 5S RNP which is composed of the 5S RNA, RPL5 and RPL11.

The protein localises to the cytoplasm. It localises to the nucleus. Its subcellular location is the nucleolus. Functionally, component of the ribosome, a large ribonucleoprotein complex responsible for the synthesis of proteins in the cell. The small ribosomal subunit (SSU) binds messenger RNAs (mRNAs) and translates the encoded message by selecting cognate aminoacyl-transfer RNA (tRNA) molecules. The large subunit (LSU) contains the ribosomal catalytic site termed the peptidyl transferase center (PTC), which catalyzes the formation of peptide bonds, thereby polymerizing the amino acids delivered by tRNAs into a polypeptide chain. The nascent polypeptides leave the ribosome through a tunnel in the LSU and interact with protein factors that function in enzymatic processing, targeting, and the membrane insertion of nascent chains at the exit of the ribosomal tunnel. As part of the 5S RNP/5S ribonucleoprotein particle it is an essential component of the LSU, required for its formation and the maturation of rRNAs. It also couples ribosome biogenesis to p53/TP53 activation. As part of the 5S RNP it accumulates in the nucleoplasm and inhibits MDM2, when ribosome biogenesis is perturbed, mediating the stabilization and the activation of TP53. In Xenopus laevis (African clawed frog), this protein is Large ribosomal subunit protein uL18B (rpl5-b).